A 465-amino-acid chain; its full sequence is UDP-N-acetylmuramate--L-alanine ligase (465 aa).

112–118 (GTHGKTT) contributes to the ATP binding site.

This sequence belongs to the MurCDEF family.

It localises to the cytoplasm. The enzyme catalyses UDP-N-acetyl-alpha-D-muramate + L-alanine + ATP = UDP-N-acetyl-alpha-D-muramoyl-L-alanine + ADP + phosphate + H(+). It participates in cell wall biogenesis; peptidoglycan biosynthesis. Functionally, cell wall formation. The protein is UDP-N-acetylmuramate--L-alanine ligase of Burkholderia ambifaria (strain ATCC BAA-244 / DSM 16087 / CCUG 44356 / LMG 19182 / AMMD) (Burkholderia cepacia (strain AMMD)).